A 77-amino-acid chain; its full sequence is Conotoxin Ar5.1 b (77 aa).

Positions Met1–Ser19 are cleaved as a signal peptide. Positions Asn20–Lys44 are excised as a propeptide.

It belongs to the conotoxin T superfamily. In terms of processing, contains 2 disulfide bonds that can be either 'C1-C3, C2-C4' or 'C1-C4, C2-C3', since these disulfide connectivities have been observed for conotoxins with cysteine framework V (for examples, see AC P0DQQ7 and AC P81755). Expressed by the venom duct.

Its subcellular location is the secreted. The protein is Conotoxin Ar5.1 b of Conus arenatus (Sand-dusted cone).